A 424-amino-acid chain; its full sequence is Protein TUNICAMYCIN INDUCED 1 (424 aa).

A signal peptide spans 1–25 (MGHRVLVYVGALFLILFTIFPSSSA). N-linked (GlcNAc...) asparagine glycosylation is found at Asn-197, Asn-296, and Asn-406.

Restricted to pollen grains at high levels.

Its subcellular location is the endoplasmic reticulum. Functionally, involved in the regulation of pollen surface morphology, probably by modulating the secretion of proteins and/or lipids during pollen development. This is Protein TUNICAMYCIN INDUCED 1 from Arabidopsis thaliana (Mouse-ear cress).